Reading from the N-terminus, the 359-residue chain is Nicotinate-nucleotide--dimethylbenzimidazole phosphoribosyltransferase (359 aa).

Catalysis depends on E318, which acts as the Proton acceptor.

This sequence belongs to the CobT family. In terms of assembly, homodimer.

It carries out the reaction 5,6-dimethylbenzimidazole + nicotinate beta-D-ribonucleotide = alpha-ribazole 5'-phosphate + nicotinate + H(+). It participates in nucleoside biosynthesis; alpha-ribazole biosynthesis; alpha-ribazole from 5,6-dimethylbenzimidazole: step 1/2. In terms of biological role, catalyzes the synthesis of alpha-ribazole-5'-phosphate from nicotinate mononucleotide (NAMN) and 5,6-dimethylbenzimidazole (DMB). The polypeptide is Nicotinate-nucleotide--dimethylbenzimidazole phosphoribosyltransferase (Shigella flexneri serotype 5b (strain 8401)).